The primary structure comprises 633 residues: Kelch-like protein diablo (633 aa).

Residues 1–62 form a disordered region; that stretch reads MGDLPGSTGG…ARLSHTSEKH (62 aa). Positions 7 to 25 are enriched in gly residues; that stretch reads STGGGGGVGGGGNGGGGPT. Over residues 26-45 the composition is skewed to low complexity; the sequence is IAGTNGNSTTGPGSSTGSTG. In terms of domain architecture, BTB spans 80 to 147; it reads CDVVLNVGGR…CYTAHIIVEE (68 aa). One can recognise a BACK domain in the interval 182-284; it reads CLGIRAFADT…SPKFLVGTVG (103 aa). Kelch repeat units follow at residues 331-377, 379-425, 426-472, 474-519, 521-566, and 567-613; these read VLFA…VLND, LYAV…VLDG, FLYA…VLGG, LYAI…VFNN, IYAV…VVNG, and QLYA…VMRA.

It participates in protein modification; protein ubiquitination. Its function is as follows. Probable substrate-specific adapter of an E3 ubiquitin-protein ligase complex which mediates the ubiquitination and subsequent proteasomal degradation of target proteins. May have a role in synapse differentiation and growth. This chain is Kelch-like protein diablo, found in Drosophila ananassae (Fruit fly).